Reading from the N-terminus, the 1493-residue chain is Sister chromatid cohesion protein 2 (1493 aa).

Position 43 is a phosphoserine; in mutant scc2-8A (Ser43). The residue at position 67 (Thr67) is a Phosphothreonine. The residue at position 74 (Ser74) is a Phosphoserine; in mutant scc2-8A. Phosphoserine is present on residues Ser127 and Ser157. The interval 151 to 170 (SNAGNLSFNDNSSNKKTKTS) is disordered. Ser162 is subject to Phosphoserine; in mutant scc2-8A. Position 163 is a phosphoserine (Ser163). Phosphothreonine occurs at positions 231 and 236. Phosphoserine occurs at positions 305 and 320. Phosphothreonine; in mutant scc2-8A is present on Thr360. 4 HEAT repeats span residues 695–732 (NLYD…KDKV), 734–771 (LSNP…YFEF), 806–843 (TKVY…KVHE), and 1132–1169 (FNSR…LEER). Ser753 carries the phosphoserine modification. At Ser1179 the chain carries Phosphoserine; in mutant scc2-8A. Ser1182 carries the phosphoserine modification. Ser1183 carries the post-translational modification Phosphoserine; in mutant scc2-8A. At Ser1185 the chain carries Phosphoserine. Residues 1244-1281 (TNPSHSIPTVIALFASTSQYIRHVAYELLEDLFEKYET) form an HEAT 5 repeat.

Belongs to the SCC2/Nipped-B family. Interacts with SCC4. Interacts with the cohesin complex, which is composed of: the SMC1 and SMC3 heterodimer attached via their hinge domain, MCD1/SCC1 which link them, and IRR1/SCC3, which interacts with MCD1. In terms of processing, phosphorylated at alternative sites Ser-43, Ser-74, Ser-162, Thr-360, Ser-1179 and Ser-1183 when the principal phosphorylation sites Thr-67, Ser-127, Ser-157, Ser-163, Thr-231, Thr-236, Ser-305 and Ser-320 are mutated to alanines.

The protein localises to the nucleus. Its subcellular location is the chromosome. The protein resides in the centromere. Functionally, plays a structural role in chromatin and is involved in sister chromatid cohesion. Forms a complex with SCC4 required for the stable association of the cohesin complex with chromatin, which may act by hydrolyzing ATP from SMC1 and SMC3 heads. Binds to the nucleosome-free promoter regions of ribosomal protein genes and tRNA genes. Involved in transcriptional regulation by cooperating with the RSC complex to maintain nucleosome exhaustion at its binding sites. This chain is Sister chromatid cohesion protein 2 (SCC2), found in Saccharomyces cerevisiae (strain ATCC 204508 / S288c) (Baker's yeast).